Consider the following 48-residue polypeptide: Large ribosomal subunit protein bL34 (48 aa).

This sequence belongs to the bacterial ribosomal protein bL34 family.

The chain is Large ribosomal subunit protein bL34 from Gloeothece citriformis (strain PCC 7424) (Cyanothece sp. (strain PCC 7424)).